We begin with the raw amino-acid sequence, 653 residues long: Transmembrane and coiled-coil domains protein 1 (653 aa).

The residue at position 1 (methionine 1) is an N-acetylmethionine. 4 disordered regions span residues 1 to 35 (MEPS…QKLS), 58 to 78 (HQRR…ADPE), 112 to 165 (PPKM…APTS), and 204 to 227 (TSSA…TPDP). Residues 1–591 (MEPSGSEQLF…ARNLLGKLIN (591 aa)) are Cytoplasmic-facing. A compositionally biased stretch (basic and acidic residues) spans 20–34 (QDAEARKQTESEQKL). The span at 64 to 74 (SVSPHDVQQIQ) shows a compositional bias: polar residues. The segment covering 113–125 (PKMKRGTSLHSRR) has biased composition (basic residues). Residues 135 to 144 (PQINRKSGQE) are compositionally biased toward polar residues. Low complexity predominate over residues 153-165 (RPRSSSTTDAPTS). Residues 204 to 218 (TSSAVASSTDGSIHT) are compositionally biased toward polar residues. A coiled-coil region spans residues 228–313 (QRTKAAIAHL…RKLREVEQNG (86 aa)). Serine 382 and serine 414 each carry phosphoserine. Residues 415 to 437 (PKYGSEEDCSSATSGSVGANSTT) form a disordered region. Over residues 424–437 (SSATSGSVGANSTT) the composition is skewed to polar residues. Residues 458-576 (GFDALLHEIQ…QQQQVVQLEG (119 aa)) adopt a coiled-coil conformation. A run of 2 helical transmembrane segments spans residues 592–612 (ILLA…NCVV) and 625–645 (LFLV…FSYV). Topologically, residues 646–653 (ERFFSSPR) are cytoplasmic.

The protein belongs to the TEX28 family. May form homodimers and heterodimers with TMCC2 or TMCC3 via the coiled-coil domains. Interacts with ribosomal proteins RPL4 and RPS6.

Its subcellular location is the endoplasmic reticulum membrane. Its function is as follows. Endoplasmic reticulum membrane protein that promotes endoplasmic reticulum-associated endosome fission. Localizes to contact sites between the endoplasmic reticulum and endosomes and acts by promoting recruitment of the endoplasmic reticulum to endosome tubules for fission. Endosome membrane fission of early and late endosomes is essential to separate regions destined for lysosomal degradation from carriers to be recycled to the plasma membrane. This Homo sapiens (Human) protein is Transmembrane and coiled-coil domains protein 1.